The following is a 330-amino-acid chain: Apolipoprotein E (330 aa).

The N-terminal stretch at 1–18 (MKVLWAALVVALLAGCWA) is a signal peptide. The interval 21-43 (EPESPLQGKPEPELEPELEPKRE) is disordered. 7 consecutive repeat copies span residues 96–117 (TLME…EQLG), 118–139 (PMAS…ARLR), 140–161 (SDME…AMLG), 162–183 (QSTE…KRVL), 184–205 (RDAE…EGAE), 206–227 (RSVS…TRHA), and 247–268 (GRLE…EQME). The tract at residues 96 to 268 (TLMEETMKEI…HLDEVREQME (173 aa)) is 7 X 22 AA approximate tandem repeats. Methionine 159 bears the Methionine sulfoxide mark. Phosphoserine is present on serine 163. The segment at 174–184 (HMRKLRKRVLR) is LDL and other lipoprotein receptors binding. Position 178-181 (178-181 (LRKR)) interacts with heparin. The segment at 226–303 (HANLATQPLR…SWFEPLVEDM (78 aa)) is lipid-binding and lipoprotein association. 242-249 (GQQLRGRL) contributes to the heparin binding site. The interval 279–330 (NQMRQQVEAFQARLKSWFEPLVEDMQRQWAGLVEKVQVAVGTSPTTPPLETK) is homooligomerization. The tract at residues 291 to 303 (RLKSWFEPLVEDM) is specificity for association with VLDL.

The protein belongs to the apolipoprotein A1/A4/E family. Homotetramer. May interact with ABCA1; functionally associated with ABCA1 in the biogenesis of HDLs. May interact with APP/A4 amyloid-beta peptide; the interaction is extremely stable in vitro but its physiological significance is unclear. May interact with MAPT. May interact with MAP2. In the cerebrospinal fluid, interacts with secreted SORL1. Interacts with PMEL; this allows the loading of PMEL luminal fragment on ILVs to induce fibril nucleation. In terms of processing, APOE exists as multiple glycosylated and sialylated glycoforms within cells and in plasma. The extent of glycosylation and sialylation are tissue and context specific. Post-translationally, glycated in plasma VLDL. Phosphorylated by FAM20C in the extracellular medium.

The protein localises to the secreted. The protein resides in the extracellular space. It is found in the extracellular matrix. Its subcellular location is the extracellular vesicle. It localises to the endosome. The protein localises to the multivesicular body. Its function is as follows. APOE is an apolipoprotein, a protein associating with lipid particles, that mainly functions in lipoprotein-mediated lipid transport between organs via the plasma and interstitial fluids. APOE is a core component of plasma lipoproteins and is involved in their production, conversion and clearance. Apolipoproteins are amphipathic molecules that interact both with lipids of the lipoprotein particle core and the aqueous environment of the plasma. As such, APOE associates with chylomicrons, chylomicron remnants, very low density lipoproteins (VLDL) and intermediate density lipoproteins (IDL) but shows a preferential binding to high-density lipoproteins (HDL). It also binds a wide range of cellular receptors including the LDL receptor/LDLR, the LDL receptor-related proteins LRP1, LRP2 and LRP8 and the very low-density lipoprotein receptor/VLDLR that mediate the cellular uptake of the APOE-containing lipoprotein particles. Finally, APOE also has a heparin-binding activity and binds heparan-sulfate proteoglycans on the surface of cells, a property that supports the capture and the receptor-mediated uptake of APOE-containing lipoproteins by cells. A main function of APOE is to mediate lipoprotein clearance through the uptake of chylomicrons, VLDLs, and HDLs by hepatocytes. APOE is also involved in the biosynthesis by the liver of VLDLs as well as their uptake by peripheral tissues ensuring the delivery of triglycerides and energy storage in muscle, heart and adipose tissues. By participating in the lipoprotein-mediated distribution of lipids among tissues, APOE plays a critical role in plasma and tissues lipid homeostasis. APOE is also involved in two steps of reverse cholesterol transport, the HDLs-mediated transport of cholesterol from peripheral tissues to the liver, and thereby plays an important role in cholesterol homeostasis. First, it is functionally associated with ABCA1 in the biogenesis of HDLs in tissues. Second, it is enriched in circulating HDLs and mediates their uptake by hepatocytes. APOE also plays an important role in lipid transport in the central nervous system, regulating neuron survival and sprouting. The polypeptide is Apolipoprotein E (APOE) (Neomonachus schauinslandi (Hawaiian monk seal)).